Consider the following 142-residue polypeptide: Large ribosomal subunit protein uL11 (142 aa).

This sequence belongs to the universal ribosomal protein uL11 family. As to quaternary structure, part of the ribosomal stalk of the 50S ribosomal subunit. Interacts with L10 and the large rRNA to form the base of the stalk. L10 forms an elongated spine to which L12 dimers bind in a sequential fashion forming a multimeric L10(L12)X complex. In terms of processing, one or more lysine residues are methylated.

Functionally, forms part of the ribosomal stalk which helps the ribosome interact with GTP-bound translation factors. The protein is Large ribosomal subunit protein uL11 of Xanthomonas campestris pv. campestris (strain B100).